Here is a 213-residue protein sequence, read N- to C-terminus: MKPYQRQFIEFALDKQVLKFGEFTLKSGRKSPYFFNAGLFNTGRDLALLGRFYAEALVDSGIEFDLLFGPAYKGIPIATTTAVALAEHHDKDLPYCFNRKEAKDHGEGGNLVGSALRGRVMLVDDVITAGTAIRESMEIIQAHGATLAGVLISLDRQERGRSEISAIHEVERDYGCNVISIITLKDLITYLEEKPEMAEHLAAVRAYWEEFGV.

Position 26 (lysine 26) interacts with 5-phospho-alpha-D-ribose 1-diphosphate. Residue 34 to 35 (FF) coordinates orotate. 5-phospho-alpha-D-ribose 1-diphosphate-binding positions include 72 to 73 (YK), arginine 99, lysine 100, lysine 103, histidine 105, and 124 to 132 (DDVITAGTA). Threonine 128 and arginine 156 together coordinate orotate.

This sequence belongs to the purine/pyrimidine phosphoribosyltransferase family. PyrE subfamily. As to quaternary structure, homodimer. The cofactor is Mg(2+).

It carries out the reaction orotidine 5'-phosphate + diphosphate = orotate + 5-phospho-alpha-D-ribose 1-diphosphate. Its pathway is pyrimidine metabolism; UMP biosynthesis via de novo pathway; UMP from orotate: step 1/2. Functionally, catalyzes the transfer of a ribosyl phosphate group from 5-phosphoribose 1-diphosphate to orotate, leading to the formation of orotidine monophosphate (OMP). The sequence is that of Orotate phosphoribosyltransferase from Salmonella arizonae (strain ATCC BAA-731 / CDC346-86 / RSK2980).